Consider the following 33-residue polypeptide: uncharacterized protein (33 aa).

This is an uncharacterized protein from Archaeoglobus fulgidus (strain ATCC 49558 / DSM 4304 / JCM 9628 / NBRC 100126 / VC-16).